A 198-amino-acid chain; its full sequence is Recombination protein RecR (198 aa).

The C4-type zinc finger occupies 57–72 (CAMCNTFTEHEVCETC). The Toprim domain occupies 80–175 (ALLCVVETPG…KVSRLARGVP (96 aa)).

The protein belongs to the RecR family.

In terms of biological role, may play a role in DNA repair. It seems to be involved in an RecBC-independent recombinational process of DNA repair. It may act with RecF and RecO. In Janthinobacterium sp. (strain Marseille) (Minibacterium massiliensis), this protein is Recombination protein RecR.